The chain runs to 273 residues: Putative phosphoenolpyruvate synthase regulatory protein (273 aa).

Residue 153 to 160 (AVSRAGKT) participates in ADP binding.

The protein belongs to the pyruvate, phosphate/water dikinase regulatory protein family. PSRP subfamily.

It catalyses the reaction [pyruvate, water dikinase] + ADP = [pyruvate, water dikinase]-phosphate + AMP + H(+). The enzyme catalyses [pyruvate, water dikinase]-phosphate + phosphate + H(+) = [pyruvate, water dikinase] + diphosphate. Its function is as follows. Bifunctional serine/threonine kinase and phosphorylase involved in the regulation of the phosphoenolpyruvate synthase (PEPS) by catalyzing its phosphorylation/dephosphorylation. The sequence is that of Putative phosphoenolpyruvate synthase regulatory protein from Xylella fastidiosa (strain M23).